The primary structure comprises 288 residues: Translocon-associated protein subunit alpha (288 aa).

The N-terminal stretch at 1–28 (MFNFGSKILVLFLVAFPCGLISFGRVSA) is a signal peptide. The Lumenal portion of the chain corresponds to 29-208 (DSESAEDIFP…ELEEGLDGET (180 aa)). The segment at 34 to 69 (EDIFPDSTVDEEEEEEEDEVLVEEDQVPGSETEDDI) is disordered. Residues N137 and N192 are each glycosylated (N-linked (GlcNAc...) asparagine). Residues 209–229 (IFMYIFLTGLVVLAVFGMYQV) form a helical membrane-spanning segment. The Cytoplasmic segment spans residues 230–288 (LESRTRKRFPVKVETGTGGMNGVDISWIPQETLNIMSKASASPKASPRKRTKRAVGVDQ). The disordered stretch occupies residues 267–288 (KASASPKASPRKRTKRAVGVDQ).

The protein belongs to the TRAP-alpha family. Heterotetramer of TRAP-alpha, TRAP-beta, TRAP-delta and TRAP-gamma. Phosphorylated in its cytoplasmic tail.

It is found in the endoplasmic reticulum membrane. Its function is as follows. TRAP proteins are part of a complex whose function is to bind calcium to the ER membrane and thereby regulate the retention of ER resident proteins. May be involved in the recycling of the translocation apparatus after completion of the translocation process or may function as a membrane-bound chaperone facilitating folding of translocated proteins. The protein is Translocon-associated protein subunit alpha (ssr1) of Oncorhynchus mykiss (Rainbow trout).